Consider the following 236-residue polypeptide: Sugar fermentation stimulation protein homolog (236 aa).

The protein belongs to the SfsA family.

The chain is Sugar fermentation stimulation protein homolog from Desulfotalea psychrophila (strain LSv54 / DSM 12343).